Consider the following 242-residue polypeptide: Methylthioribulose-1-phosphate dehydratase (242 aa).

Serine 87 bears the Phosphoserine mark. Cysteine 97 contributes to the substrate binding site. The Zn(2+) site is built by histidine 115 and histidine 117. Residue glutamate 139 is the Proton donor/acceptor of the active site. Histidine 195 is a binding site for Zn(2+).

Belongs to the aldolase class II family. MtnB subfamily. In terms of assembly, homotetramer. Interacts with APAF1. May interact with CASP1. Zn(2+) is required as a cofactor. In terms of tissue distribution, isoform 1 is ubiquitously expressed. Isoform 2 is expressed at lower levels and detected in heart, brain, pancreas, liver, placenta, skeletal muscle and kidney.

The protein localises to the cytoplasm. It carries out the reaction 5-(methylsulfanyl)-D-ribulose 1-phosphate = 5-methylsulfanyl-2,3-dioxopentyl phosphate + H2O. It functions in the pathway amino-acid biosynthesis; L-methionine biosynthesis via salvage pathway; L-methionine from S-methyl-5-thio-alpha-D-ribose 1-phosphate: step 2/6. Functionally, catalyzes the dehydration of methylthioribulose-1-phosphate (MTRu-1-P) into 2,3-diketo-5-methylthiopentyl-1-phosphate (DK-MTP-1-P). Functions in the methionine salvage pathway, which plays a key role in cancer, apoptosis, microbial proliferation and inflammation. May inhibit the CASP1-related inflammatory response (pyroptosis), the CASP9-dependent apoptotic pathway and the cytochrome c-dependent and APAF1-mediated cell death. The sequence is that of Methylthioribulose-1-phosphate dehydratase from Homo sapiens (Human).